We begin with the raw amino-acid sequence, 231 residues long: 26S proteasome non-ATPase regulatory subunit 10 (231 aa).

ANK repeat units lie at residues 3–36 (GCVSNLMVCNLAYNGKLDELKESILADKSLATRT), 37–69 (DQDSRTALHWACSAGHTEIVEFLLQLGVPVNEK), 70–102 (DDAGWSPLHIAASAGRDEIVKALLIKGAQVNAV), 103–135 (NQNGCTALHYAASKNRHEIAVMLLEGGANPDAK), 136–168 (NHYDATAMHRAAAKGNLKMVHILLFYKASTNIQ), 169–201 (DTEGNTPLHLACDEERVEEAKLLVTQGASIYIE), and 202–226 (NKEEKTPLQVAKGGLGLILKRIAES).

Part of transient complex containing PSMD10, PSMC4, PSMC5 and PAAF1 formed during the assembly of the 26S proteasome. Stays associated throughout the assembly of the PA700/19S RC and is released upon association with the 20S core. Interacts with PSMC4. Interacts with RB1. Interacts with CDK4. Interacts with MDM2. Interacts with RELA. Associates with a CDK4:CCND2 serine/threonine kinase complex. Interacts with ARHGDIA and increases the interaction between ARHGDIA and RHOA, hence promotes ARHGDIA inactivation of RHOA and ROCK.

It localises to the cytoplasm. Its subcellular location is the nucleus. Functionally, acts as a chaperone during the assembly of the 26S proteasome, specifically of the PA700/19S regulatory complex (RC). In the initial step of the base subcomplex assembly is part of an intermediate PSMD10:PSMC4:PSMC5:PAAF1 module which probably assembles with a PSMD5:PSMC2:PSMC1:PSMD2 module. Independently of the proteasome, regulates EGF-induced AKT activation through inhibition of the RHOA/ROCK/PTEN pathway, leading to prolonged AKT activation. Plays an important role in RAS-induced tumorigenesis. Acts as an oncoprotein by being involved in negative regulation of tumor suppressors RB1 and p53/TP53. Overexpression is leading to phosphorylation of RB1 and proteasomal degradation of RB1. Regulates CDK4-mediated phosphorylation of RB1 by competing with CDKN2A for binding with CDK4. Facilitates binding of MDM2 to p53/TP53 and the mono- and polyubiquitination of p53/TP53 by MDM2 suggesting a function in targeting the TP53:MDM2 complex to the 26S proteasome. Involved in p53-independent apoptosis. Involved in regulation of NF-kappa-B by retaining it in the cytoplasm. Binds to the NF-kappa-B component RELA and accelerates its XPO1/CRM1-mediated nuclear export. In Rattus norvegicus (Rat), this protein is 26S proteasome non-ATPase regulatory subunit 10 (Psmd10).